The following is a 149-amino-acid chain: Transcriptional repressor NrdR (149 aa).

A zinc finger lies at 3–34 (CPFCAAVDTKVIDSRLVGDGSQVRRRRQCLEC). Positions 49–139 (PRVIKSDDIR…VYRSFEDIRE (91 aa)) constitute an ATP-cone domain.

This sequence belongs to the NrdR family. The cofactor is Zn(2+).

Negatively regulates transcription of bacterial ribonucleotide reductase nrd genes and operons by binding to NrdR-boxes. This chain is Transcriptional repressor NrdR, found in Photorhabdus laumondii subsp. laumondii (strain DSM 15139 / CIP 105565 / TT01) (Photorhabdus luminescens subsp. laumondii).